We begin with the raw amino-acid sequence, 717 residues long: Delta-1-pyrroline-5-carboxylate synthase (717 aa).

The glutamate 5-kinase stretch occupies residues 1–296 (MDAVDSTRAF…WAPVGDVGAR (296 aa)). Residues S60, D157, and N176 each contribute to the substrate site. Residues 196–197 (SD) and 236–242 (RGGMTAK) contribute to the ATP site. Positions 297-717 (DMAVAARESS…YTHKDLTSHA (421 aa)) are gamma-glutamyl phosphate reductase.

In the N-terminal section; belongs to the glutamate 5-kinase family. This sequence in the C-terminal section; belongs to the gamma-glutamyl phosphate reductase family. In terms of tissue distribution, expressed at high levels in leaves and is inducible in roots subjected to salt stress.

It catalyses the reaction L-glutamate + ATP = L-glutamyl 5-phosphate + ADP. It carries out the reaction L-glutamate 5-semialdehyde + phosphate + NADP(+) = L-glutamyl 5-phosphate + NADPH + H(+). The protein operates within amino-acid biosynthesis; L-proline biosynthesis; L-glutamate 5-semialdehyde from L-glutamate: step 1/2. Its pathway is amino-acid biosynthesis; L-proline biosynthesis; L-glutamate 5-semialdehyde from L-glutamate: step 2/2. With respect to regulation, feedback regulated by proline. Functionally, P5CS plays a key role in proline biosynthesis, leading to osmoregulation in plants. This Actinidia deliciosa (Kiwi) protein is Delta-1-pyrroline-5-carboxylate synthase.